A 359-amino-acid chain; its full sequence is 4-galactosyl-N-acetylglucosaminide 3-alpha-L-fucosyltransferase 9 (359 aa).

Over 1-11 the chain is Cytoplasmic; the sequence is MTSASKGILRP. A helical; Signal-anchor for type II membrane protein transmembrane segment spans residues 12 to 32; the sequence is FLIVCIILGCFMACLLIYIKP. At 33 to 359 the chain is on the lumenal side; it reads TNSWIFSPME…VGNLEKWFWN (327 aa). Asn-62 is a glycosylation site (N-linked (GlcNAc...) asparagine). The tract at residues 63 to 168 is acceptor-binding; that stretch reads ETTILIWVWP…RRDSDIQVPY (106 aa). Gln-75 serves as a coordination point for a beta-D-galactosyl-(1-&gt;4)-N-acetyl-beta-D-glucosaminyl derivative. 3 cysteine pairs are disulfide-bonded: Cys-82/Cys-335, Cys-91/Cys-338, and Cys-190/Cys-238. N-linked (GlcNAc...) asparagine glycosylation is present at Asn-101. Residue Glu-137 coordinates a beta-D-galactosyl-(1-&gt;4)-N-acetyl-beta-D-glucosaminyl derivative. The Nucleophile role is filled by Glu-137. Glu-137 lines the GDP-beta-L-fucose pocket. The N-linked (GlcNAc...) asparagine glycan is linked to Asn-153. Residues Tyr-168, Val-192, Ser-194, Asn-195, Arg-202, Val-226, Tyr-241, Asn-246, Tyr-252, Glu-255, and Lys-256 each contribute to the GDP-beta-L-fucose site. The segment at 169 to 326 is donor-binding; sequence GFLTVSTNPF…NWRKDFTVNL (158 aa). Positions 327–359 are acceptor-binding; it reads PRFWESHACLACDHVKRHQEYKSVGNLEKWFWN.

It belongs to the glycosyltransferase 10 family. In terms of assembly, homodimer. In terms of processing, N-glycosylated with complex-type N-glycans.

The protein resides in the golgi apparatus. It is found in the trans-Golgi network membrane. Its subcellular location is the golgi apparatus membrane. It carries out the reaction a beta-D-galactosyl-(1-&gt;4)-N-acetyl-beta-D-glucosaminyl derivative + GDP-beta-L-fucose = a beta-D-galactosyl-(1-&gt;4)-[alpha-L-fucosyl-(1-&gt;3)]-N-acetyl-beta-D-glucosaminyl derivative + GDP + H(+). The enzyme catalyses an alpha-Neu5Ac-(2-&gt;3)-beta-D-Gal-(1-&gt;4)-beta-D-GlcNAc-(1-&gt;3)-beta-D-Gal-(1-&gt;4)-beta-D-GlcNAc derivative + GDP-beta-L-fucose = an alpha-Neu5Ac-(2-&gt;3)-beta-D-Gal-(1-&gt;4)-beta-D-GlcNAc-(1-&gt;3)-beta-D-Gal-(1-&gt;4)-[alpha-L-Fuc-(1-&gt;3)]-beta-D-GlcNAc derivative + GDP + H(+). The catalysed reaction is alpha-N-glycoloylneuraminosyl-(2-&gt;3)-beta-D-galactosyl-(1-&gt;4)-N-acetyl-beta-D-glucosaminyl-(1-&gt;3)-beta-D-galactosyl-(1-&gt;4)-N-acetyl-beta-D-glucosaminyl-(1-&gt;3)-beta-D-galactosyl-(1-&gt;4)-beta-D-glucosyl-(1&lt;-&gt;1')-ceramide + GDP-beta-L-fucose = alpha-N-glycoloylneuraminosyl-(2-&gt;3)-beta-D-galactosyl-(1-&gt;4)-N-acetyl-beta-D-glucosaminyl-(1-&gt;3)-beta-D-galactosyl-(1-&gt;4)-[alpha-L-fucosyl-(1-&gt;3)]-N-acetyl-beta-D-glucosaminyl-(1-&gt;3)-beta-D-galactosyl-(1-&gt;4)-beta-D-glucosyl-(1&lt;-&gt;1')-ceramide + GDP + H(+). It catalyses the reaction alpha-D-galactosyl-(1-&gt;3)-beta-D-galactosyl-(1-&gt;4)-N-acetyl-beta-D-glucosaminyl-(1-&gt;3)-beta-D-galactosyl-(1-&gt;4)-beta-D-glucosyl-(1&lt;-&gt;1')-ceramide + GDP-beta-L-fucose = a neolactoside IV(3)-alpha-Gal,III(3)-alpha-Fuc-nLc4Cer + GDP + H(+). It carries out the reaction a neolactoside nLc4Cer + GDP-beta-L-fucose = a neolactoside III(3)-alpha-Fuc-nLc4Cer + GDP + H(+). The enzyme catalyses an N-acetyl-alpha-neuraminyl-(2-&gt;3)-beta-D-galactosyl-(1-&gt;4)-N-acetyl-beta-D-glucosaminyl derivative + GDP-beta-L-fucose = an alpha-Neu5Ac-(2-&gt;3)-beta-D-Gal-(1-&gt;4)-[alpha-L-Fuc-(1-&gt;3)]-beta-D-GlcNAc derivative + GDP + H(+). The catalysed reaction is beta-D-Gal-(1-&gt;4)-beta-D-GlcNAc-(1-&gt;3)-beta-D-Gal-(1-&gt;4)-D-Glc + GDP-beta-L-fucose = beta-D-Gal-(1-&gt;4)-[alpha-L-Fuc-(1-&gt;3)]-beta-D-GlcNAc-(1-&gt;3)-beta-D-Gal-(1-&gt;4)-D-Glc + GDP + H(+). It catalyses the reaction an alpha-L-Fuc-(1-&gt;2)-beta-D-Gal-(1-&gt;4)-beta-D-GlcNAc derivative + GDP-beta-L-fucose = an alpha-L-Fuc-(1-&gt;2)-beta-D-Gal-(1-&gt;4)-[alpha-L-Fuc-(1-&gt;3)]-beta-D-GlcNAc derivative + GDP + H(+). Its pathway is protein modification; protein glycosylation. The protein operates within glycolipid biosynthesis. Activated by Mn2+. Functionally, catalyzes alpha(1-&gt;3) linkage of fucosyl moiety transferred from GDP-beta-L-fucose to N-acetyl glucosamine (GlcNAc) within type 2 lactosamine (LacNAc, beta-D-Gal-(1-&gt;4)-beta-D-GlcNAc-) glycan attached to glycolipids and N- or O-linked glycoproteins. Fucosylates distal type 2 LacNAc and its fucosylated (H-type 2 LacNAc) and sialylated (sialyl-type 2 LacNAc) derivatives to form Lewis x (Lex) (CD15) and Lewis y (Ley) antigenic epitopes involved in cell adhesion and differentiation. Generates Lex epitopes in the brain, presumably playing a role in the maintenance of neuronal stemness and neurite outgrowth in progenitor neural cells. Fucosylates the internal type 2 LacNAc unit of the polylactosamine chain to form VIM-2 antigen that serves as recognition epitope for SELE. Can also modify milk oligosaccharides in particular type 2 tetrasaccharide LNnT. The chain is 4-galactosyl-N-acetylglucosaminide 3-alpha-L-fucosyltransferase 9 from Canis lupus familiaris (Dog).